Here is a 244-residue protein sequence, read N- to C-terminus: Salivary gland SP38-40.A protein (244 aa).

The signal sequence occupies residues 1 to 21; the sequence is MRIKFLVVLAVICLFAHYASA. Disordered regions lie at residues 23-91, 137-169, and 206-244; these read GMGG…EKKQ, PPPGAKKDDKKEKKTVKVVKPPKEKPPKKLRKE, and VQGKQKKGAKKAKGGKKAAPKPGPKPGPKQADKPKDAKK. 2 stretches are compositionally biased toward basic and acidic residues: residues 26-86 and 157-169; these read GDKK…EVKK and PPKEKPPKKLRKE. 2 repeat units span residues 29 to 34 and 35 to 40. The 3 X 6 AA approximate tandem repeats of K-P-K-D-A-P stretch occupies residues 29–47; the sequence is KPKDAPKPKDAPKPKEVKP. The 1-3; approximate repeat unit spans residues 41-47; that stretch reads KPKEVKP. Tandem repeats lie at residues 156–159 and 161–164. A 3 X 4 AA approximate tandem repeats of K-P-P-K region spans residues 156-168; sequence KPPKEKPPKKLRK. The 2-3; approximate repeat unit spans residues 165–168; the sequence is KLRK. Positions 209-224 are enriched in basic residues; it reads KQKKGAKKAKGGKKAA. A run of 3 repeats spans residues 225-228, 229-232, and 233-236. The tract at residues 225 to 240 is 4 X 4 AA approximate tandem repeats of P-K-[PQ]-[GA]; that stretch reads PKPGPKPGPKQADKPK. Basic and acidic residues predominate over residues 235 to 244; the sequence is QADKPKDAKK. One copy of the 3-4; approximate repeat lies at 237–240; the sequence is DKPK.

As to expression, salivary gland.

It localises to the secreted. In terms of biological role, used by the larvae to construct a supramolecular structure, the larval tube. This is Salivary gland SP38-40.A protein (SP38-40.A) from Chironomus tentans (Midge).